We begin with the raw amino-acid sequence, 301 residues long: Mitochondrial import receptor subunit TOM40 homolog (301 aa).

Over residues 1 to 19 (MATPTESELASPIPQTNPG) the composition is skewed to polar residues. The disordered stretch occupies residues 1 to 20 (MATPTESELASPIPQTNPGS).

This sequence belongs to the Tom40 family. In terms of assembly, forms part of the preprotein translocase complex of the outer mitochondrial membrane (TOM complex). Interacts with mitochondrial targeting sequences. Ubiquitously expressed, but highly expressed in the pharyngeal muscles, the nerve ring, the intestine, gonadal sheath and in the tail hypodermis.

The protein localises to the mitochondrion outer membrane. Functionally, channel-forming protein essential for import of protein precursors into mitochondria. Specifically required for nnt-1 accumulation in the mitochondria and may be involved in the secretion of daf-28/insulin from the mitochondria. Required for embryonic and larval development. This chain is Mitochondrial import receptor subunit TOM40 homolog, found in Caenorhabditis elegans.